Here is a 686-residue protein sequence, read N- to C-terminus: Putative cuticle collagen 99 (686 aa).

Disordered stretches follow at residues 42 to 79 and 163 to 444; these read PPIGNSDDNSDDVAKSRKVRNSCMCPPGPPGERGPVGP and GPIG…SLVA. Residues 67-79 show a composition bias toward pro residues; the sequence is PPGPPGERGPVGP. Triple-helical region stretches follow at residues 142–201, 230–263, and 268–296; these read GMPG…KGDR, GPPGPPGPPGPPGPAGRDGRHGMKGDRGLPGFDG, and GPKGETGNPGRDGIPGARGPPGERGEKGD. The span at 231–243 shows a compositional bias: pro residues; sequence PPGPPGPPGPPGP. Over residues 246-256 the composition is skewed to basic and acidic residues; sequence RDGRHGMKGDR. Over residues 306-318 the composition is skewed to low complexity; it reads GQSVSTVSSSGSQ. 2 stretches are compositionally biased toward basic and acidic residues: residues 361-373 and 401-417; these read EKGERGERGETGD and RDGRPGEKGEKGEHGLR. A triple-helical region region spans residues 394–439; sequence GPPGPPGRDGRPGEKGEKGEHGLRGDMGLPGPEGTPGKRGRRGRHG. Residues Asn-446 and Asn-535 are each glycosylated (N-linked (GlcNAc...) asparagine). The disordered stretch occupies residues 475-650; that stretch reads KNVIPGPPGP…TGPDGLPLPY (176 aa). Triple-helical region regions lie at residues 479 to 536, 538 to 576, and 577 to 636; these read PGPP…SGNQ, GPRGPPGLPGPPGEKGDLGPPGLPGQPGALGLPGHPGPM, and GLRG…PGLD. The span at 540-549 shows a compositional bias: pro residues; it reads RGPPGLPGPP. Residues 563–581 show a composition bias toward low complexity; that stretch reads QPGALGLPGHPGPMGLRGP.

The protein belongs to the cuticular collagen family. Collagen polypeptide chains are complexed within the cuticle by disulfide bonds and other types of covalent cross-links.

Functionally, nematode cuticles are composed largely of collagen-like proteins. The cuticle functions both as an exoskeleton and as a barrier to protect the worm from its environment. This is Putative cuticle collagen 99 from Caenorhabditis briggsae.